The chain runs to 204 residues: LexA repressor (204 aa).

The H-T-H motif DNA-binding region spans 28-48 (RAEIAQELGFKSPNAAEEHLK). Catalysis depends on for autocatalytic cleavage activity residues Ser-125 and Lys-162.

This sequence belongs to the peptidase S24 family. As to quaternary structure, homodimer.

The catalysed reaction is Hydrolysis of Ala-|-Gly bond in repressor LexA.. Functionally, represses a number of genes involved in the response to DNA damage (SOS response), including recA and lexA. In the presence of single-stranded DNA, RecA interacts with LexA causing an autocatalytic cleavage which disrupts the DNA-binding part of LexA, leading to derepression of the SOS regulon and eventually DNA repair. The polypeptide is LexA repressor (Ectopseudomonas mendocina (strain ymp) (Pseudomonas mendocina)).